The sequence spans 276 residues: 2-dehydro-3-deoxyphosphooctonate aldolase (276 aa).

This sequence belongs to the KdsA family.

It localises to the cytoplasm. It catalyses the reaction D-arabinose 5-phosphate + phosphoenolpyruvate + H2O = 3-deoxy-alpha-D-manno-2-octulosonate-8-phosphate + phosphate. It participates in carbohydrate biosynthesis; 3-deoxy-D-manno-octulosonate biosynthesis; 3-deoxy-D-manno-octulosonate from D-ribulose 5-phosphate: step 2/3. Its pathway is bacterial outer membrane biogenesis; lipopolysaccharide biosynthesis. The chain is 2-dehydro-3-deoxyphosphooctonate aldolase from Xylella fastidiosa (strain 9a5c).